Consider the following 120-residue polypeptide: Small ribosomal subunit protein uS13 (120 aa).

Residues R93–A120 are disordered.

This sequence belongs to the universal ribosomal protein uS13 family. Part of the 30S ribosomal subunit. Forms a loose heterodimer with protein S19. Forms two bridges to the 50S subunit in the 70S ribosome.

In terms of biological role, located at the top of the head of the 30S subunit, it contacts several helices of the 16S rRNA. In the 70S ribosome it contacts the 23S rRNA (bridge B1a) and protein L5 of the 50S subunit (bridge B1b), connecting the 2 subunits; these bridges are implicated in subunit movement. Contacts the tRNAs in the A and P-sites. In Sulfurovum sp. (strain NBC37-1), this protein is Small ribosomal subunit protein uS13.